The primary structure comprises 299 residues: MLKCHPGFNTKLELLKYGIQFVYFIVGLGFHFAVIKVLHKKWSVYSKYPFLKLYYVDSILSVLIILLDLVLIRVFNYIPPLCQWVLQEFPEPSQLISILFIEQYLQFVKSLIFCFMVVNRANNVICVKSFGTIQSCIIPHVIVFCILCPLLGVWTAFLSDSRFVPFQGGFIHETMMEYHWITVSQFSVIISSITIVTVCICSVISMLCISRTHAENKHTEQSLTASALAMSIFYVFALSMNIYCQKAHASSLEMLEFWKALTAFAFDIILVCPPVIMLCLNVRLRINVFSVDTRPTSPK.

Helical transmembrane passes span 18–38 (GIQFVYFIVGLGFHFAVIKVL), 59–79 (ILSVLIILLDLVLIRVFNYIP), 98–118 (ILFIEQYLQFVKSLIFCFMVV), 137–157 (IIPHVIVFCILCPLLGVWTAF), 189–209 (IISSITIVTVCICSVISMLCI), 223–243 (LTASALAMSIFYVFALSMNIY), and 260–280 (ALTAFAFDIILVCPPVIMLCL).

Belongs to the nematode receptor-like protein srg family.

It localises to the membrane. The chain is Serpentine receptor class gamma-30 (srg-30) from Caenorhabditis elegans.